We begin with the raw amino-acid sequence, 854 residues long: Aryl hydrocarbon receptor (854 aa).

Residues 1–9 constitute a propeptide that is removed on maturation; it reads MSSGANITY. The segment at 1–38 is disordered; it reads MSSGANITYASRKRRKPVQKTVKPIPAEGIKSNPSKRH. Short sequence motifs (nuclear localization signal) lie at residues 12–15 and 36–41; these read RKRR and KRHRDR. A bHLH domain is found at 26 to 79; that stretch reads PAEGIKSNPSKRHRDRLNTELDRLASLLPFPQDVINKLDKLSVLRLSVSYLRAK. Positions 37–65 are DNA-binding; sequence RHRDRLNTELDRLASLLPFPQDVINKLDK. Required for maintaining the overall integrity of the AHR:ARNT heterodimer and its transcriptional activity regions lie at residues 49-81, 116-124, and 264-266; these read LASL…AKSF, LLQALNGFV, and FAI. Positions 63–71 match the Nuclear export signal motif; it reads LDKLSVLRL. The PAS 1 domain maps to 111–175; that stretch reads QEGEFLLQAL…AEFQRQLHWA (65 aa). The 71-residue stretch at 270–340 folds into the PAS 2 domain; sequence LQPPSILEIR…CAESHIRMIK (71 aa). In terms of domain architecture, PAC spans 346 to 387; that stretch reads MTVFRLLAKHSRWRWVQSNARLIYRNGRPDYIIATQRPLTDE. The tract at residues 425–451 is disordered; it reads LPIRTKSNTSRKDWAPQSTPSKDSFHP. Over residues 440–451 the composition is skewed to polar residues; that stretch reads PQSTPSKDSFHP.

In terms of assembly, homodimer. Heterodimer; efficient DNA binding requires dimerization with another bHLH protein. Interacts with ARNT; the heterodimer ARNT:AHR binds to core DNA sequence 5'-TGCGTG-3' within the dioxin response element (DRE) of target gene promoters and activates their transcription. Binds MYBBP1A. Interacts with coactivators including SRC-1, RIP140 and NOCA7, and with the corepressor SMRT. Interacts with NEDD8 and IVNS1ABP. Interacts with BMAL1. Interacts with HSP90AB1. Interacts with TIPARP; leading to mono-ADP-ribosylation of AHR and subsequent inhibition of AHR. In terms of processing, mono-ADP-ribosylated, leading to inhibit transcription activator activity of AHR.

It is found in the cytoplasm. The protein resides in the nucleus. Its function is as follows. Ligand-activated transcription factor that enables cells to adapt to changing conditions by sensing compounds from the environment, diet, microbiome and cellular metabolism, and which plays important roles in development, immunity and cancer. Upon ligand binding, translocates into the nucleus, where it heterodimerizes with ARNT and induces transcription by binding to xenobiotic response elements (XRE). Regulates a variety of biological processes, including angiogenesis, hematopoiesis, drug and lipid metabolism, cell motility and immune modulation. Xenobiotics can act as ligands: upon xenobiotic-binding, activates the expression of multiple phase I and II xenobiotic chemical metabolizing enzyme genes (such as the CYP1A1 gene). Mediates biochemical and toxic effects of halogenated aromatic hydrocarbons. Next to xenobiotics, natural ligands derived from plants, microbiota, and endogenous metabolism are potent AHR agonists. Tryptophan (Trp) derivatives constitute an important class of endogenous AHR ligands. Acts as a negative regulator of anti-tumor immunity: indoles and kynurenic acid generated by Trp catabolism act as ligand and activate AHR, thereby promoting AHR-driven cancer cell motility and suppressing adaptive immunity. Regulates the circadian clock by inhibiting the basal and circadian expression of the core circadian component PER1. Inhibits PER1 by repressing the CLOCK-BMAL1 heterodimer mediated transcriptional activation of PER1. The heterodimer ARNT:AHR binds to core DNA sequence 5'-TGCGTG-3' within the dioxin response element (DRE) of target gene promoters and activates their transcription. This Mus spicilegus (Steppe mouse) protein is Aryl hydrocarbon receptor (Ahr).